A 301-amino-acid chain; its full sequence is Acetyl-coenzyme A carboxylase carboxyl transferase subunit beta (301 aa).

The CoA carboxyltransferase N-terminal domain maps to 25–294 (LWIKCPETGE…SAANDMNSGA (270 aa)).

The protein belongs to the AccD/PCCB family. Acetyl-CoA carboxylase is a heterohexamer composed of biotin carboxyl carrier protein (AccB), biotin carboxylase (AccC) and two subunits each of ACCase subunit alpha (AccA) and ACCase subunit beta (AccD).

It localises to the cytoplasm. It carries out the reaction N(6)-carboxybiotinyl-L-lysyl-[protein] + acetyl-CoA = N(6)-biotinyl-L-lysyl-[protein] + malonyl-CoA. Its pathway is lipid metabolism; malonyl-CoA biosynthesis; malonyl-CoA from acetyl-CoA: step 1/1. In terms of biological role, component of the acetyl coenzyme A carboxylase (ACC) complex. Biotin carboxylase (BC) catalyzes the carboxylation of biotin on its carrier protein (BCCP) and then the CO(2) group is transferred by the transcarboxylase to acetyl-CoA to form malonyl-CoA. In Rhizobium leguminosarum bv. trifolii (strain WSM1325), this protein is Acetyl-coenzyme A carboxylase carboxyl transferase subunit beta.